We begin with the raw amino-acid sequence, 270 residues long: Formamidopyrimidine-DNA glycosylase (270 aa).

Catalysis depends on Pro2, which acts as the Schiff-base intermediate with DNA. Glu3 functions as the Proton donor in the catalytic mechanism. Lys58 functions as the Proton donor; for beta-elimination activity in the catalytic mechanism. DNA-binding residues include His91, Arg110, and Lys151. An FPG-type zinc finger spans residues 236–270 (FAYGRGGQPCKVCGTTLREIKLGQRASVYCPKCQR). The Proton donor; for delta-elimination activity role is filled by Arg260.

Belongs to the FPG family. As to quaternary structure, monomer. Zn(2+) serves as cofactor.

It catalyses the reaction Hydrolysis of DNA containing ring-opened 7-methylguanine residues, releasing 2,6-diamino-4-hydroxy-5-(N-methyl)formamidopyrimidine.. It carries out the reaction 2'-deoxyribonucleotide-(2'-deoxyribose 5'-phosphate)-2'-deoxyribonucleotide-DNA = a 3'-end 2'-deoxyribonucleotide-(2,3-dehydro-2,3-deoxyribose 5'-phosphate)-DNA + a 5'-end 5'-phospho-2'-deoxyribonucleoside-DNA + H(+). Involved in base excision repair of DNA damaged by oxidation or by mutagenic agents. Acts as a DNA glycosylase that recognizes and removes damaged bases. Has a preference for oxidized purines, such as 7,8-dihydro-8-oxoguanine (8-oxoG). Has AP (apurinic/apyrimidinic) lyase activity and introduces nicks in the DNA strand. Cleaves the DNA backbone by beta-delta elimination to generate a single-strand break at the site of the removed base with both 3'- and 5'-phosphates. In Pseudomonas syringae pv. tomato (strain ATCC BAA-871 / DC3000), this protein is Formamidopyrimidine-DNA glycosylase.